Reading from the N-terminus, the 288-residue chain is Phosphatidylserine decarboxylase proenzyme (288 aa).

Active-site charge relay system; for autoendoproteolytic cleavage activity residues include aspartate 91, histidine 148, and serine 254. Residue serine 254 is the Schiff-base intermediate with substrate; via pyruvic acid; for decarboxylase activity of the active site. The residue at position 254 (serine 254) is a Pyruvic acid (Ser); by autocatalysis.

It belongs to the phosphatidylserine decarboxylase family. PSD-B subfamily. Prokaryotic type I sub-subfamily. In terms of assembly, heterodimer of a large membrane-associated beta subunit and a small pyruvoyl-containing alpha subunit. Requires pyruvate as cofactor. Post-translationally, is synthesized initially as an inactive proenzyme. Formation of the active enzyme involves a self-maturation process in which the active site pyruvoyl group is generated from an internal serine residue via an autocatalytic post-translational modification. Two non-identical subunits are generated from the proenzyme in this reaction, and the pyruvate is formed at the N-terminus of the alpha chain, which is derived from the carboxyl end of the proenzyme. The autoendoproteolytic cleavage occurs by a canonical serine protease mechanism, in which the side chain hydroxyl group of the serine supplies its oxygen atom to form the C-terminus of the beta chain, while the remainder of the serine residue undergoes an oxidative deamination to produce ammonia and the pyruvoyl prosthetic group on the alpha chain. During this reaction, the Ser that is part of the protease active site of the proenzyme becomes the pyruvoyl prosthetic group, which constitutes an essential element of the active site of the mature decarboxylase.

The protein resides in the cell membrane. It carries out the reaction a 1,2-diacyl-sn-glycero-3-phospho-L-serine + H(+) = a 1,2-diacyl-sn-glycero-3-phosphoethanolamine + CO2. Its pathway is phospholipid metabolism; phosphatidylethanolamine biosynthesis; phosphatidylethanolamine from CDP-diacylglycerol: step 2/2. Its function is as follows. Catalyzes the formation of phosphatidylethanolamine (PtdEtn) from phosphatidylserine (PtdSer). The sequence is that of Phosphatidylserine decarboxylase proenzyme from Pseudoalteromonas translucida (strain TAC 125).